The chain runs to 180 residues: Epididymal-specific lipocalin-6 (180 aa).

The N-terminal stretch at 1–20 (MGGLLLAALLALVAVPRAQA) is a signal peptide. A disulfide bond links Cys81 and Cys174.

It belongs to the calycin superfamily. Lipocalin family.

It is found in the secreted. In terms of biological role, may play a role in male fertility. The sequence is that of Epididymal-specific lipocalin-6 (LCN6) from Macaca mulatta (Rhesus macaque).